Consider the following 282-residue polypeptide: Acetyl-coenzyme A carboxylase carboxyl transferase subunit beta (282 aa).

The CoA carboxyltransferase N-terminal domain occupies Ile23 to Ala282. Residues Cys27, Cys30, Cys46, and Cys49 each coordinate Zn(2+). The segment at Cys27–Cys49 adopts a C4-type zinc-finger fold.

It belongs to the AccD/PCCB family. Acetyl-CoA carboxylase is a heterohexamer composed of biotin carboxyl carrier protein (AccB), biotin carboxylase (AccC) and two subunits each of ACCase subunit alpha (AccA) and ACCase subunit beta (AccD). Zn(2+) serves as cofactor.

The protein localises to the cytoplasm. It carries out the reaction N(6)-carboxybiotinyl-L-lysyl-[protein] + acetyl-CoA = N(6)-biotinyl-L-lysyl-[protein] + malonyl-CoA. The protein operates within lipid metabolism; malonyl-CoA biosynthesis; malonyl-CoA from acetyl-CoA: step 1/1. Its function is as follows. Component of the acetyl coenzyme A carboxylase (ACC) complex. Biotin carboxylase (BC) catalyzes the carboxylation of biotin on its carrier protein (BCCP) and then the CO(2) group is transferred by the transcarboxylase to acetyl-CoA to form malonyl-CoA. This is Acetyl-coenzyme A carboxylase carboxyl transferase subunit beta from Pseudoalteromonas atlantica (strain T6c / ATCC BAA-1087).